The sequence spans 457 residues: Argininosuccinate lyase (457 aa).

The protein belongs to the lyase 1 family. Argininosuccinate lyase subfamily.

The protein localises to the cytoplasm. It carries out the reaction 2-(N(omega)-L-arginino)succinate = fumarate + L-arginine. It participates in amino-acid biosynthesis; L-arginine biosynthesis; L-arginine from L-ornithine and carbamoyl phosphate: step 3/3. This Escherichia coli O127:H6 (strain E2348/69 / EPEC) protein is Argininosuccinate lyase.